A 182-amino-acid polypeptide reads, in one-letter code: Lipid A acyltransferase PagP (182 aa).

A signal peptide spans 1–21 (MTQYFRALAFFLLLVPATAMA). Cysteine 22 carries the N-palmitoyl cysteine lipid modification. Cysteine 22 carries the S-diacylglycerol cysteine lipid modification. Residues histidine 55, aspartate 98, and serine 99 contribute to the active site.

It belongs to the lipid A palmitoyltransferase family. As to quaternary structure, homodimer.

Its subcellular location is the cell outer membrane. The catalysed reaction is a lipid A + a 1,2-diacyl-sn-glycero-3-phosphocholine = a hepta-acyl lipid A + a 2-acyl-sn-glycero-3-phosphocholine. It carries out the reaction a lipid IVA + a 1,2-diacyl-sn-glycero-3-phosphocholine = a lipid IVB + a 2-acyl-sn-glycero-3-phosphocholine. It catalyses the reaction a lipid IIA + a 1,2-diacyl-sn-glycero-3-phosphocholine = a lipid IIB + a 2-acyl-sn-glycero-3-phosphocholine. Functionally, transfers a fatty acid residue from the sn-1 position of a phospholipid to the N-linked hydroxyfatty acid chain on the proximal unit of lipid A or its precursors. In Bordetella parapertussis (strain 12822 / ATCC BAA-587 / NCTC 13253), this protein is Lipid A acyltransferase PagP.